The sequence spans 207 residues: Guanylate kinase (207 aa).

One can recognise a Guanylate kinase-like domain in the interval 6-185 (GLLIVLSGPS…AKNRIQSIVE (180 aa)). 13–20 (GPSGVGKG) is an ATP binding site.

The protein belongs to the guanylate kinase family.

The protein localises to the cytoplasm. The enzyme catalyses GMP + ATP = GDP + ADP. Functionally, essential for recycling GMP and indirectly, cGMP. This chain is Guanylate kinase, found in Staphylococcus epidermidis (strain ATCC 35984 / DSM 28319 / BCRC 17069 / CCUG 31568 / BM 3577 / RP62A).